Here is a 380-residue protein sequence, read N- to C-terminus: Erythronate-4-phosphate dehydrogenase (380 aa).

Positions 45 and 66 each coordinate substrate. Residues aspartate 146 and threonine 174 each coordinate NAD(+). Arginine 207 is an active-site residue. Aspartate 231 lines the NAD(+) pocket. Residue glutamate 236 is part of the active site. Histidine 253 serves as the catalytic Proton donor. Glycine 256 is a binding site for NAD(+). A substrate-binding site is contributed by tyrosine 257.

It belongs to the D-isomer specific 2-hydroxyacid dehydrogenase family. PdxB subfamily. As to quaternary structure, homodimer.

It is found in the cytoplasm. The enzyme catalyses 4-phospho-D-erythronate + NAD(+) = (R)-3-hydroxy-2-oxo-4-phosphooxybutanoate + NADH + H(+). The protein operates within cofactor biosynthesis; pyridoxine 5'-phosphate biosynthesis; pyridoxine 5'-phosphate from D-erythrose 4-phosphate: step 2/5. Functionally, catalyzes the oxidation of erythronate-4-phosphate to 3-hydroxy-2-oxo-4-phosphonooxybutanoate. This Pseudomonas fluorescens (strain ATCC BAA-477 / NRRL B-23932 / Pf-5) protein is Erythronate-4-phosphate dehydrogenase.